The primary structure comprises 480 residues: Gamma-aminobutyric acid receptor subunit rho-1 (480 aa).

A signal peptide spans 1-21 (MLAVRNMKFGIFLLWWGWVLA). At 22 to 281 (AESTVHWPGR…LYINFTLRRH (260 aa)) the chain is on the extracellular side. A disordered region spans residues 31-67 (REVHEPSKKGSRPQRQRRGAHDDAHKQGSPILKRSSD). A compositionally biased stretch (basic residues) spans 39-48 (KGSRPQRQRR). R126 lines the 4-aminobutanoate pocket. N141 is a glycosylation site (N-linked (GlcNAc...) asparagine). S190 lines the 4-aminobutanoate pocket. C199 and C213 are joined by a disulfide. Position 218 (E218) interacts with 4-aminobutanoate. N-linked (GlcNAc...) asparagine glycans are attached at residues N235 and N275. The chain crosses the membrane as a helical span at residues 282-302 (IFFFLLQTYFPATLMVMLSWV). Over 303 to 314 (SFWIDRRAVPAR) the chain is Cytoplasmic. Residues 315–335 (VPLGITTVLTMSTIITGVNAS) form a helical membrane-spanning segment. Over 336–346 (MPRVSYIKAVD) the chain is Extracellular. Residues 347 to 367 (IYLWVSFVFVFLSVLEYAAVN) form a helical membrane-spanning segment. Over 368–458 (YLTTVQERKE…MRINTHAIDK (91 aa)) the chain is Cytoplasmic. A helical transmembrane segment spans residues 459–479 (YSRIIFPAAYILFNLIYWSIF). Position 480 (S480) is a topological domain, extracellular.

It belongs to the ligand-gated ion channel (TC 1.A.9) family. Gamma-aminobutyric acid receptor (TC 1.A.9.5) subfamily. GABRR1 sub-subfamily. As to quaternary structure, three rho subunits (rho-1/GBRR1, rho-2/GBRR2 and rho-3/GBRR3) coassemble either to form functional homopentamers or heteropentamers. Rho-1/GBRR1 subunits can also associate with alpha-1/GBRA1 subunits to form a functional GABAAR. Interacts with SQSTM1.

It localises to the postsynaptic cell membrane. It is found in the cell membrane. The catalysed reaction is chloride(in) = chloride(out). Its activity is regulated as follows. Inhibited by TPMPA, a rho-specific antagonist. Inhibited by picrotoxin, when forming a homopentamer. In contrast with other GABAARs, rho-1 GABAAR is not inhibited by bicuculline, when forming a homopentamer. Down-regulated by external protons when forming a homopentamer. Rho subunit of the pentameric ligand-gated chloride channels responsible for mediating the effects of gamma-aminobutyric acid (GABA), the major inhibitory neurotransmitter in the brain. Rho-containing GABA-gated chloride channels are a subclass of GABA(A) receptors (GABAARs) entirely composed of rho subunits, where GABA molecules bind at the rho intersubunit interfaces. When activated by GABA, rho-GABAARs selectively allow the flow of chloride anions across the cell membrane down their electrochemical gradient. Rho-1 subunits are primarily expressed in retina where rho-1-containing GABAARs may play a role in retinal neurotransmission. Rho-1 GABAARs are also involved in neuronal tonic (extrasynaptic) and phasic (synaptic) transmission in the Purkinje neurons of the cerebellum. Rho-1 GABAARs may also contribute to the regulation of glial development in the cerebellum by controlling extrasynaptic transmission. The sequence is that of Gamma-aminobutyric acid receptor subunit rho-1 from Rattus norvegicus (Rat).